A 346-amino-acid chain; its full sequence is Small ribosomal subunit biogenesis GTPase RsgA 1 (346 aa).

In terms of domain architecture, CP-type G spans 93-248 (EEQLIAANFD…IIDTPGMREF (156 aa)). GTP is bound by residues 138–141 (TKAD) and 190–198 (GSSGVGKSS). 4 residues coordinate Zn(2+): Cys271, Cys276, His278, and Cys284.

The protein belongs to the TRAFAC class YlqF/YawG GTPase family. RsgA subfamily. Monomer. Associates with 30S ribosomal subunit, binds 16S rRNA. The cofactor is Zn(2+).

It is found in the cytoplasm. One of several proteins that assist in the late maturation steps of the functional core of the 30S ribosomal subunit. Helps release RbfA from mature subunits. May play a role in the assembly of ribosomal proteins into the subunit. Circularly permuted GTPase that catalyzes slow GTP hydrolysis, GTPase activity is stimulated by the 30S ribosomal subunit. This Listeria innocua serovar 6a (strain ATCC BAA-680 / CLIP 11262) protein is Small ribosomal subunit biogenesis GTPase RsgA 1.